Consider the following 1220-residue polypeptide: Plasma membrane calcium-transporting ATPase 1 (1220 aa).

Glycine 2 is modified (N-acetylglycine). Residues 2 to 105 (GDMANNSVAY…KTFLQLVWEA (104 aa)) are Cytoplasmic-facing. 2 positions are modified to phosphoserine: serine 8 and serine 17. Residues 106–126 (LQDVTLIILEIAAIVSLGLSF) traverse the membrane as a helical segment. Residues 127 to 154 (YQPPEGDNALCGEVSVGEEEGEGETGWI) are Extracellular-facing. The chain crosses the membrane as a helical span at residues 155–175 (EGAAILLSVVCVVLVTAFNDW). At 176–366 (SKEKQFRGLQ…KEKSVLQGKL (191 aa)) the chain is on the cytoplasmic side. The interval 297–356 (EEEKKDEKKKEKKNKKQDGAIENRNKAKAQDGAAMEMQPLKSEEGGDGDEKDKKKANLPK) is disordered. Basic and acidic residues-rich tracts occupy residues 312–325 (KQDG…KAKA) and 337–356 (KSEE…NLPK). Serine 338 carries the phosphoserine modification. A helical membrane pass occupies residues 367 to 386 (TKLAVQIGKAGLLMSAITVI). Over 387–418 (ILVLYFVIDTFWVQKRPWLAECTPIYIQYFVK) the chain is Extracellular. The helical transmembrane segment at 419-439 (FFIIGVTVLVVAVPEGLPLAV) threads the bilayer. The Cytoplasmic portion of the chain corresponds to 440-855 (TISLAYSVKK…RNVYDSISKF (416 aa)). Residue aspartate 475 is the 4-aspartylphosphate intermediate of the active site. Positions 475, 477, and 797 each coordinate Mg(2+). The chain crosses the membrane as a helical span at residues 856 to 876 (LQFQLTVNVVAVIVAFTGACI). Over 877 to 882 (TQDSPL) the chain is Extracellular. A helical membrane pass occupies residues 883 to 903 (KAVQMLWVNLIMDTLASLALA). Over 904–927 (TEPPTESLLLRKPYGRNKPLISRT) the chain is Cytoplasmic. Residues 928–948 (MMKNILGHAFYQLVVVFTLLF) traverse the membrane as a helical segment. The Extracellular portion of the chain corresponds to 949–971 (AGEKFFDIDSGRNAPLHAPPSEH). A helical transmembrane segment spans residues 972 to 991 (YTIVFNTFVLMQLFNEINAR). At 992–1005 (KIHGERNVFEGIFN) the chain is on the cytoplasmic side. The chain crosses the membrane as a helical span at residues 1006–1027 (NAIFCTIVLGTFVVQIIIVQFG). Residues 1028-1039 (GKPFSCSELSIE) are Extracellular-facing. Residues 1040-1060 (QWLWSIFLGMGTLLWGQLIST) traverse the membrane as a helical segment. Residues 1061–1220 (IPTSRLKFLK…SPLHSLETSL (160 aa)) are Cytoplasmic-facing. Positions 1100 to 1117 (LRRGQILWFRGLNRIQTQ) are calmodulin-binding subdomain A. Threonine 1116 is modified (phosphothreonine; by PKC). Positions 1118–1220 (IRVVNAFRSS…SPLHSLETSL (103 aa)) are required for basolateral membrane targeting. Serine 1140 and serine 1155 each carry phosphoserine. Positions 1162–1220 (IDDTDAEDDAPTKRNSSPPPSPNKNNNAVDSGIHLTIEMNKSATSSSPGSPLHSLETSL) are disordered. Threonine 1165 carries the post-translational modification Phosphothreonine. Serine 1177 bears the Phosphoserine; by PKA mark. Serine 1178 and serine 1182 each carry phosphoserine. The segment covering 1200-1220 (MNKSATSSSPGSPLHSLETSL) has biased composition (polar residues).

It belongs to the cation transport ATPase (P-type) (TC 3.A.3) family. Type IIB subfamily. In terms of assembly, monomer. Dimer. Oligomer. Calmodulin binding. Interacts with PDZD11. Interacts with SLC35G1 and STIM1. Interacts with YWHAE; interacts with the monomeric and dimeric forms of the YWHAE but prefer the monomer form; this interaction inhibits calcium-transporting ATPase activity. Interacts with NPTN; this interaction stabilizes ATP2B1 and increases ATPase activity; this interaction controls T cell calcium homeostasis following T cell activation. Interacts with EPB41; regulates small intestinal calcium absorption through regulation of membrane expression of ATP2B1. Isoform B is ubiquitously expressed. Isoforms A and E have only been found in brain cortex. Isoform C is found in brain cortex, skeletal muscle and heart muscle. Isoform D has only been found in fetal skeletal muscle. Isoform K has been found in small intestine and liver. Isoform B is expressed in hair cells of inner ear.

Its subcellular location is the cell membrane. It localises to the basolateral cell membrane. The protein resides in the synapse. The protein localises to the presynaptic cell membrane. It is found in the cytoplasmic vesicle. Its subcellular location is the secretory vesicle. It localises to the synaptic vesicle membrane. It carries out the reaction Ca(2+)(in) + ATP + H2O = Ca(2+)(out) + ADP + phosphate + H(+). Functionally, catalyzes the hydrolysis of ATP coupled with the transport of calcium from the cytoplasm to the extracellular space thereby maintaining intracellular calcium homeostasis. Plays a role in blood pressure regulation through regulation of intracellular calcium concentration and nitric oxide production leading to regulation of vascular smooth muscle cells vasoconstriction. Positively regulates bone mineralization through absorption of calcium from the intestine. Plays dual roles in osteoclast differentiation and survival by regulating RANKL-induced calcium oscillations in preosteoclasts and mediating calcium extrusion in mature osteoclasts. Regulates insulin sensitivity through calcium/calmodulin signaling pathway by regulating AKT1 activation and NOS3 activation in endothelial cells. May play a role in synaptic transmission by modulating calcium and proton dynamics at the synaptic vesicles. The protein is Plasma membrane calcium-transporting ATPase 1 of Rattus norvegicus (Rat).